The following is a 281-amino-acid chain: Very long chain fatty acid elongase 7 (281 aa).

Ala-2 carries the N-acetylalanine modification. The Lumenal portion of the chain corresponds to 2-27 (AFSDLTSRTVRLYDNWIKDADPRVED). The helical transmembrane segment at 28-48 (WLLMSSPLPQTIILGFYVYFV) threads the bilayer. Over 49 to 66 (TSLGPKLMENRKPFELKK) the chain is Cytoplasmic. Residues 67–87 (VMITYNFSIVLFSVYMFYEFI) traverse the membrane as a helical segment. At 88–115 (MSGWGTGYSFRCDIVDYSQSPTALRMVR) the chain is on the lumenal side. The cysteines at positions 99 and 231 are disulfide-linked. The helical transmembrane segment at 116 to 136 (TCWLYYFSKFIELLDTIFFIL) threads the bilayer. 3-oxoeicosanoyl-CoA contacts are provided by Lys-124, Arg-137, Lys-139, Gln-142, and His-147. Residues 137-142 (RKKNSQ) are Cytoplasmic-facing. Residues 143 to 162 (VTFLHVFHHTIMPWTWWFGV) form a helical membrane-spanning segment. Positions 147–151 (HVFHH) match the HxxHH motif motif. The Nucleophile role is filled by His-150. Topologically, residues 163-171 (KFAAGGLGT) are lumenal. Residues 172–194 (FHAFLNTAVHVVMYSYYGLCALG) traverse the membrane as a helical segment. 4 residues coordinate 3-oxoeicosanoyl-CoA: Tyr-187, Lys-204, Thr-208, and Gln-211. Residues 195 to 206 (PDYQKYLWWKKY) lie on the Cytoplasmic side of the membrane. The chain crosses the membrane as a helical span at residues 207 to 227 (LTSLQLIQFVLITIHISQFFF). Residues 228 to 236 (MEDCKYQFP) are Lumenal-facing. Residues 237–257 (VFQYIIMSYGCIFLLLFLHFW) traverse the membrane as a helical segment. The Cytoplasmic portion of the chain corresponds to 258 to 281 (YRAYTKGQRLPKTVKHGICKNKDH). Residue Arg-266 coordinates 3-oxoeicosanoyl-CoA. The short motif at 277–281 (KNKDH) is the Di-lysine motif element.

Belongs to the ELO family. ELOVL7 subfamily. Homodimer. Interacts with TECR.

Its subcellular location is the endoplasmic reticulum membrane. It carries out the reaction a very-long-chain acyl-CoA + malonyl-CoA + H(+) = a very-long-chain 3-oxoacyl-CoA + CO2 + CoA. It catalyses the reaction eicosanoyl-CoA + malonyl-CoA + H(+) = 3-oxodocosanoyl-CoA + CO2 + CoA. The catalysed reaction is (5Z,8Z,11Z,14Z)-eicosatetraenoyl-CoA + malonyl-CoA + H(+) = (7Z,10Z,13Z,16Z)-3-oxodocosatetraenoyl-CoA + CO2 + CoA. The enzyme catalyses (6Z,9Z,12Z)-octadecatrienoyl-CoA + malonyl-CoA + H(+) = (8Z,11Z,14Z)-3-oxoeicosatrienoyl-CoA + CO2 + CoA. It carries out the reaction (9Z,12Z)-octadecadienoyl-CoA + malonyl-CoA + H(+) = (11Z,14Z)-3-oxoicosa-11,14-dienoyl-CoA + CO2 + CoA. It catalyses the reaction (9Z)-octadecenoyl-CoA + malonyl-CoA + H(+) = 3-oxo-(11Z)-eicosenoyl-CoA + CO2 + CoA. The catalysed reaction is octadecanoyl-CoA + malonyl-CoA + H(+) = 3-oxoeicosanoyl-CoA + CO2 + CoA. The enzyme catalyses hexadecanoyl-CoA + malonyl-CoA + H(+) = 3-oxooctadecanoyl-CoA + CO2 + CoA. It carries out the reaction (9Z,12Z,15Z)-octadecatrienoyl-CoA + malonyl-CoA + H(+) = (11Z,14Z,17Z)-3-oxoeicosatrienoyl-CoA + CO2 + CoA. It participates in lipid metabolism; fatty acid biosynthesis. Its function is as follows. Catalyzes the first and rate-limiting reaction of the four reactions that constitute the long-chain fatty acids elongation cycle. This endoplasmic reticulum-bound enzymatic process allows the addition of 2 carbons to the chain of long- and very long-chain fatty acids (VLCFAs) per cycle. Condensing enzyme with higher activity toward C18 acyl-CoAs, especially C18:3(n-3) acyl-CoAs and C18:3(n-6)-CoAs. Also active toward C20:4-, C18:0-, C18:1-, C18:2- and C16:0-CoAs, and weakly toward C20:0-CoA. Little or no activity toward C22:0-, C24:0-, or C26:0-CoAs. May participate in the production of saturated and polyunsaturated VLCFAs of different chain lengths that are involved in multiple biological processes as precursors of membrane lipids and lipid mediators. The polypeptide is Very long chain fatty acid elongase 7 (Bos taurus (Bovine)).